Reading from the N-terminus, the 291-residue chain is tRNA U34 carboxymethyltransferase (291 aa).

Carboxy-S-adenosyl-L-methionine-binding positions include K61, W75, K80, G100, D122–S124, V149–E150, Y169, and R284.

The protein belongs to the class I-like SAM-binding methyltransferase superfamily. CmoB family. Homotetramer.

The enzyme catalyses carboxy-S-adenosyl-L-methionine + 5-hydroxyuridine(34) in tRNA = 5-carboxymethoxyuridine(34) in tRNA + S-adenosyl-L-homocysteine + H(+). Its function is as follows. Catalyzes carboxymethyl transfer from carboxy-S-adenosyl-L-methionine (Cx-SAM) to 5-hydroxyuridine (ho5U) to form 5-carboxymethoxyuridine (cmo5U) at position 34 in tRNAs. In Campylobacter jejuni subsp. jejuni serotype O:6 (strain 81116 / NCTC 11828), this protein is tRNA U34 carboxymethyltransferase.